We begin with the raw amino-acid sequence, 83 residues long: Keratin-associated protein 6-1 (83 aa).

Residues 9-15 (YGGLGCG) form an RPT 1-1 repeat. One copy of the RPT 1-2 repeat lies at 19–25 (YGGLGCG). One copy of the RPT 2-1 repeat lies at 44 to 55 (GYGYGSRSLCGS). The RPT 2-2 repeat unit spans residues 56–67 (GYGYGSRSLCGS).

The protein belongs to the KRTAP type 6 family. As to quaternary structure, interacts with wool keratins.

Functionally, in the wool cortex, wool keratin intermediate filaments are embedded in an interfilamentous matrix, consisting of hair keratin-associated proteins (KRTAP), which are essential for the formation of a rigid and resistant wool shaft through their extensive disulfide bond cross-linking with abundant cysteine residues of wool keratins. The matrix proteins include the high-sulfur and high-glycine-tyrosine keratins. This Ovis aries (Sheep) protein is Keratin-associated protein 6-1 (KRTAP6-1).